A 417-amino-acid polypeptide reads, in one-letter code: Serine hydroxymethyltransferase (417 aa).

Residues L121 and 125–127 (GHL) each bind (6S)-5,6,7,8-tetrahydrofolate. K229 carries the N6-(pyridoxal phosphate)lysine modification. 355 to 357 (SPF) provides a ligand contact to (6S)-5,6,7,8-tetrahydrofolate.

The protein belongs to the SHMT family. Homodimer. It depends on pyridoxal 5'-phosphate as a cofactor.

It localises to the cytoplasm. The catalysed reaction is (6R)-5,10-methylene-5,6,7,8-tetrahydrofolate + glycine + H2O = (6S)-5,6,7,8-tetrahydrofolate + L-serine. It functions in the pathway one-carbon metabolism; tetrahydrofolate interconversion. Its pathway is amino-acid biosynthesis; glycine biosynthesis; glycine from L-serine: step 1/1. Functionally, catalyzes the reversible interconversion of serine and glycine with tetrahydrofolate (THF) serving as the one-carbon carrier. This reaction serves as the major source of one-carbon groups required for the biosynthesis of purines, thymidylate, methionine, and other important biomolecules. Also exhibits THF-independent aldolase activity toward beta-hydroxyamino acids, producing glycine and aldehydes, via a retro-aldol mechanism. The sequence is that of Serine hydroxymethyltransferase from Shewanella sp. (strain MR-4).